The following is a 118-amino-acid chain: Basic phospholipase A2 nigroxin B (118 aa).

7 disulfide bridges follow: cysteine 11–cysteine 70, cysteine 25–cysteine 117, cysteine 27–cysteine 43, cysteine 42–cysteine 98, cysteine 49–cysteine 91, cysteine 59–cysteine 84, and cysteine 77–cysteine 89. 3 residues coordinate Ca(2+): tyrosine 26, glycine 28, and glycine 30. Histidine 46 is a catalytic residue. A Ca(2+)-binding site is contributed by aspartate 47. Aspartate 92 is an active-site residue.

This sequence belongs to the phospholipase A2 family. Group I subfamily. D49 sub-subfamily. It depends on Ca(2+) as a cofactor. Expressed by the venom gland.

It localises to the secreted. It carries out the reaction a 1,2-diacyl-sn-glycero-3-phosphocholine + H2O = a 1-acyl-sn-glycero-3-phosphocholine + a fatty acid + H(+). Its function is as follows. Snake venom phospholipase A2 (PLA2) that has only a weak enzymatic activity. It has a myotoxic activity in vivo (dystrophic effect). PLA2 catalyzes the calcium-dependent hydrolysis of the 2-acyl groups in 3-sn-phosphoglycerides. The protein is Basic phospholipase A2 nigroxin B of Micrurus nigrocinctus (Central American coral snake).